The sequence spans 143 residues: Granulocyte-macrophage colony-stimulating factor (143 aa).

A signal peptide spans 1 to 17 (MWLQNLLLLGTVVCSFS). Residue T27 is glycosylated (O-linked (GalNAc...) threonine). Residues N44 and N54 are each glycosylated (N-linked (GlcNAc...) asparagine). Cystine bridges form between C70/C112 and C104/C137.

This sequence belongs to the GM-CSF family. As to quaternary structure, monomer. The signaling GM-CSF receptor complex is a dodecamer of two head-to-head hexamers of two alpha, two beta, and two ligand subunits.

The protein resides in the secreted. Its function is as follows. Cytokine that stimulates the growth and differentiation of hematopoietic precursor cells from various lineages, including granulocytes, macrophages, eosinophils and erythrocytes. The polypeptide is Granulocyte-macrophage colony-stimulating factor (CSF2) (Bos taurus (Bovine)).